The sequence spans 405 residues: uncharacterized protein (405 aa).

Helical transmembrane passes span 19–39 (IVSI…PLAV), 47–67 (VMGF…FATL), 85–105 (IVVF…TAGL), 107–127 (ASLP…LGIG), 156–176 (GIVT…FYHW), 178–198 (GLQA…LLAI), 224–244 (GMAL…ITLF), 252–272 (GAAF…LLFP), 283–303 (VAMI…VATM), 309–329 (IGVL…GVVA), 344–364 (TYTV…GLVM), and 366–386 (WAGV…ALLL).

The protein belongs to the major facilitator superfamily. YhhS family.

It is found in the cell inner membrane. This is an uncharacterized protein from Escherichia coli O6:H1 (strain CFT073 / ATCC 700928 / UPEC).